The primary structure comprises 179 residues: Ubiquitin-conjugating enzyme E2 C (179 aa).

A disordered region spans residues Met1–Val31. At Ala2 the chain carries N-acetylalanine. Phosphoserine is present on Ser3. Positions Pro30 to Ser175 constitute a UBC core domain. The Glycyl thioester intermediate role is filled by Cys114.

Belongs to the ubiquitin-conjugating enzyme family. Component of the APC/C complex, composed of at least 14 distinct subunits that assemble into a complex of at least 19 chains with a combined molecular mass of around 1.2 MDa. Within this complex, directly interacts with ANAPC2. In terms of processing, autoubiquitinated by the APC/C complex, leading to its degradation by the proteasome. Its degradation plays a central role in APC/C regulation, allowing cyclin-A accumulation before S phase entry. APC/C substrates inhibit the autoubiquitination of UBE2C/UBCH10 but not its E2 function, hence APC/C remaining active until its substrates have been destroyed.

It catalyses the reaction S-ubiquitinyl-[E1 ubiquitin-activating enzyme]-L-cysteine + [E2 ubiquitin-conjugating enzyme]-L-cysteine = [E1 ubiquitin-activating enzyme]-L-cysteine + S-ubiquitinyl-[E2 ubiquitin-conjugating enzyme]-L-cysteine.. The catalysed reaction is S-ubiquitinyl-[E1 ubiquitin-activating enzyme]-L-cysteine + [acceptor protein]-L-lysine = [E1 ubiquitin-activating enzyme]-L-cysteine + N(6)-monoubiquitinyl-[acceptor protein]-L-lysine.. It functions in the pathway protein modification; protein ubiquitination. Functionally, accepts ubiquitin from the E1 complex and catalyzes its covalent attachment to other proteins. In vitro catalyzes 'Lys-11'- and 'Lys-48'-linked polyubiquitination. Acts as an essential factor of the anaphase promoting complex/cyclosome (APC/C), a cell cycle-regulated ubiquitin ligase that controls progression through mitosis. Acts by initiating 'Lys-11'-linked polyubiquitin chains on APC/C substrates, leading to the degradation of APC/C substrates by the proteasome and promoting mitotic exit. The protein is Ubiquitin-conjugating enzyme E2 C (UBE2C) of Bos taurus (Bovine).